The chain runs to 84 residues: Hirudin-HM2 (84 aa).

The N-terminal stretch at 1 to 20 is a signal peptide; it reads MFSLKLFVVFLAVCICVSQA. Residues 21–23 form an interaction with thrombin active site region; sequence VSY. Disulfide bonds link Cys-26/Cys-34, Cys-36/Cys-48, and Cys-42/Cys-57. The disordered stretch occupies residues 53 to 84; that stretch reads SGNQCVHGEGTPKPKSQTEGDFEEIPDEDILN. An O-linked (GalNAc...) threonine glycan is attached at Thr-63. The span at 72 to 84 shows a compositional bias: acidic residues; the sequence is GDFEEIPDEDILN. The interval 73–84 is interaction with fibrinogen-binding exosite of thrombin; sequence DFEEIPDEDILN.

Belongs to the protease inhibitor I14 (hirudin) family.

The protein localises to the secreted. Functionally, hirudin is a potent thrombin-specific protease inhibitor. It forms a stable non-covalent complex with alpha-thrombin, thereby abolishing its ability to cleave fibrinogen. This Hirudinaria manillensis (Asian medical leech) protein is Hirudin-HM2.